The chain runs to 581 residues: Probable bifunctional SAT/APS kinase 2 (581 aa).

The segment at 1–200 (MSGFVVWFTG…AAGGARGLIA (200 aa)) is adenylsulfate kinase. 10–17 (GLSGAGKS) is a binding site for ATP. The active-site Phosphoserine intermediate is the S84. The tract at residues 201-581 (PHGGELVNRW…ILIESMRSSS (381 aa)) is sulfate adenylyltransferase.

This sequence in the N-terminal section; belongs to the APS kinase family. In the C-terminal section; belongs to the sulfate adenylyltransferase family.

The catalysed reaction is sulfate + ATP + H(+) = adenosine 5'-phosphosulfate + diphosphate. It catalyses the reaction adenosine 5'-phosphosulfate + ATP = 3'-phosphoadenylyl sulfate + ADP + H(+). Its pathway is sulfur metabolism; hydrogen sulfide biosynthesis; sulfite from sulfate: step 1/3. It participates in sulfur metabolism; hydrogen sulfide biosynthesis; sulfite from sulfate: step 2/3. This is Probable bifunctional SAT/APS kinase 2 (sat2/cysC2) from Sorangium cellulosum (strain So ce56) (Polyangium cellulosum (strain So ce56)).